We begin with the raw amino-acid sequence, 124 residues long: Hydrogenase maturation factor HypA (124 aa).

H2 is a Ni(2+) binding site. 4 residues coordinate Zn(2+): C78, C81, C97, and C100.

The protein belongs to the HypA/HybF family.

In terms of biological role, involved in the maturation of [NiFe] hydrogenases. Required for nickel insertion into the metal center of the hydrogenase. The chain is Hydrogenase maturation factor HypA from Methanococcus vannielii (strain ATCC 35089 / DSM 1224 / JCM 13029 / OCM 148 / SB).